The chain runs to 160 residues: Transcription elongation factor GreA (160 aa).

The stretch at 2–30 (SEKTYPMTLAEKEQLEQELEELKLVRRPE) forms a coiled coil.

It belongs to the GreA/GreB family.

Its function is as follows. Necessary for efficient RNA polymerase transcription elongation past template-encoded arresting sites. The arresting sites in DNA have the property of trapping a certain fraction of elongating RNA polymerases that pass through, resulting in locked ternary complexes. Cleavage of the nascent transcript by cleavage factors such as GreA or GreB allows the resumption of elongation from the new 3'terminus. GreA releases sequences of 2 to 3 nucleotides. The chain is Transcription elongation factor GreA from Streptococcus mutans serotype c (strain ATCC 700610 / UA159).